We begin with the raw amino-acid sequence, 226 residues long: Uracil-DNA glycosylase (226 aa).

The Proton acceptor role is filled by Asp-64.

This sequence belongs to the uracil-DNA glycosylase (UDG) superfamily. UNG family.

It localises to the cytoplasm. The catalysed reaction is Hydrolyzes single-stranded DNA or mismatched double-stranded DNA and polynucleotides, releasing free uracil.. Functionally, excises uracil residues from the DNA which can arise as a result of misincorporation of dUMP residues by DNA polymerase or due to deamination of cytosine. The chain is Uracil-DNA glycosylase from Vibrio campbellii (strain ATCC BAA-1116).